Reading from the N-terminus, the 540-residue chain is 2-isopropylmalate synthase (540 aa).

Residues 8–273 form the Pyruvate carboxyltransferase domain; that stretch reads VLIFDTTLRD…FFGRDEDSPT (266 aa). 4 residues coordinate Mn(2+): Asp-17, His-208, His-210, and Asn-244. The segment at 408–540 is regulatory domain; it reads QLKLVQVSCG…MAQLDSSPVH (133 aa).

Belongs to the alpha-IPM synthase/homocitrate synthase family. LeuA type 1 subfamily. As to quaternary structure, homodimer. The cofactor is Mn(2+).

The protein localises to the cytoplasm. The catalysed reaction is 3-methyl-2-oxobutanoate + acetyl-CoA + H2O = (2S)-2-isopropylmalate + CoA + H(+). Its pathway is amino-acid biosynthesis; L-leucine biosynthesis; L-leucine from 3-methyl-2-oxobutanoate: step 1/4. Its function is as follows. Catalyzes the condensation of the acetyl group of acetyl-CoA with 3-methyl-2-oxobutanoate (2-ketoisovalerate) to form 3-carboxy-3-hydroxy-4-methylpentanoate (2-isopropylmalate). In Synechococcus sp. (strain CC9311), this protein is 2-isopropylmalate synthase.